The primary structure comprises 626 residues: Carnitine O-acetyltransferase (626 aa).

Position 93 is an N6-succinyllysine (Lys-93). Position 261 is an N6-acetyllysine; alternate (Lys-261). Lys-261 carries the post-translational modification N6-succinyllysine; alternate. N6-acetyllysine is present on Lys-268. The active-site Proton acceptor is His-343. CoA contacts are provided by residues Lys-419 and Lys-423–Asp-430. (R)-carnitine-binding residues include Tyr-452 and Ser-454. Ser-456 is a binding site for CoA. A (R)-carnitine-binding site is contributed by Thr-465. Residues Arg-504 and Gln-555 each coordinate CoA. A Microbody targeting signal motif is present at residues Ala-624–Leu-626.

This sequence belongs to the carnitine/choline acetyltransferase family. Monomer. Expressed in flagella of epididymal sperm.

It localises to the endoplasmic reticulum. The protein resides in the peroxisome. Its subcellular location is the mitochondrion inner membrane. The enzyme catalyses (R)-carnitine + acetyl-CoA = O-acetyl-(R)-carnitine + CoA. It catalyses the reaction propanoyl-CoA + (R)-carnitine = O-propanoyl-(R)-carnitine + CoA. It carries out the reaction butanoyl-CoA + (R)-carnitine = O-butanoyl-(R)-carnitine + CoA. The catalysed reaction is hexanoyl-CoA + (R)-carnitine = O-hexanoyl-(R)-carnitine + CoA. The enzyme catalyses octanoyl-CoA + (R)-carnitine = O-octanoyl-(R)-carnitine + CoA. It catalyses the reaction decanoyl-CoA + (R)-carnitine = O-decanoyl-(R)-carnitine + CoA. It carries out the reaction 3-methylbutanoyl-CoA + (R)-carnitine = O-3-methylbutanoyl-(R)-carnitine + CoA. The catalysed reaction is 2-methylpropanoyl-CoA + (R)-carnitine = O-isobutanoyl-(R)-carnitine + CoA. The enzyme catalyses 2-methylbutanoyl-CoA + (R)-carnitine = O-2-methylbutanoyl-(R)-carnitine + CoA. It catalyses the reaction acetoacetyl-CoA + (R)-carnitine = O-3-oxobutanoyl-(R)-carnitine + CoA. It carries out the reaction 3-hydroxybutanoyl-CoA + (R)-carnitine = O-3-hydroxybutanoyl-(R)-carnitine + CoA. The catalysed reaction is 4,8-dimethylnonanoyl-CoA + (R)-carnitine = O-4,8-dimethylnonanoyl-(R)-carnitine + CoA. The enzyme catalyses 2,6-dimethylheptanoyl-CoA + (R)-carnitine = O-2,6-dimethylheptanoyl-(R)-carnitine + CoA. Functionally, catalyzes the reversible transfer of acyl groups from carnitine to coenzyme A (CoA) and regulates the acyl-CoA/CoA ratio. Also plays a crucial role in the transport of fatty acids for beta-oxidation. Responsible for the synthesis of short- and branched-chain acylcarnitines. Active towards some branched-chain amino acid oxidation pathway (BCAAO) intermediates. Trans-2-enoyl-CoAs and 2-methylacyl-CoAs are poor substrates. This chain is Carnitine O-acetyltransferase, found in Rattus norvegicus (Rat).